The primary structure comprises 64 residues: UPF0337 protein SAR0874 (64 aa).

Positions 1 to 40 (MADESKFEQAKGNVKETVGNVTDNKNLENEGKEDKASGKA) are disordered. Over residues 25-40 (KNLENEGKEDKASGKA) the composition is skewed to basic and acidic residues.

Belongs to the UPF0337 (CsbD) family.

In Staphylococcus aureus (strain MRSA252), this protein is UPF0337 protein SAR0874.